The primary structure comprises 494 residues: Neuronal acetylcholine receptor subunit alpha-6 (494 aa).

A signal peptide spans 1-25 (MLTSKGQGFLHGGLCLWLCVFTPFF). Residues 26–239 (KGCVGCATEE…ITYSFYIRRL (214 aa)) lie on the Extracellular side of the membrane. 2 N-linked (GlcNAc...) asparagine glycosylation sites follow: N54 and N171. Disulfide bonds link C158-C172 and C222-C223. 3 helical membrane-spanning segments follow: residues 240–264 (PMFY…VFYL), 272–290 (VTLC…LVIT), and 306–327 (YLLF…VLNI). At 328 to 465 (HYRTPTTHTM…WKYVAMVVDR (138 aa)) the chain is on the cytoplasmic side. S401 is subject to Phosphoserine. Residues 466 to 484 (VFLWVFIIVCVFGTAGLFL) traverse the membrane as a helical segment.

This sequence belongs to the ligand-gated ion channel (TC 1.A.9) family. Acetylcholine receptor (TC 1.A.9.1) subfamily. Alpha-6/CHRNA6 sub-subfamily. As to quaternary structure, neuronal AChR is composed of two different types of subunits: alpha and non-alpha (beta). CHRNA6/alpha-6 subunit can be combined to CHRNB2/beta-2, CHRNA4/alpha-4 and CHRNB3/beta-3 to give rise to functional receptors. Heteropentamers containing CHRNB3 have an stoichiometry of (CHRNA6:CHRNB2)2:CHRNB3. Interacts with LYPD6.

It is found in the synaptic cell membrane. It carries out the reaction Ca(2+)(in) = Ca(2+)(out). The enzyme catalyses K(+)(in) = K(+)(out). The catalysed reaction is Na(+)(in) = Na(+)(out). With respect to regulation, activated by a myriad of ligands such as acetylcholine, cytisine and nicotine. CHRNA6 nAChR activity is inhibited by the antagonists alpha-conotoxin MII and PIA, a small disulfide-constrained peptides from cone snails. Functionally, component of neuronal acetylcholine receptors (nAChRs) that function as pentameric, ligand-gated cation channels with high calcium permeability among other activities. nAChRs are excitatory neurotrasnmitter receptors formed by a collection of nAChR subunits known to mediate synaptic transmission in the nervous system and the neuromuscular junction. Each nAchR subunit confers differential attributes to channel properties, including activation, deactivation and desensitization kinetics, pH sensitivity, cation permeability, and binding to allosteric modulators. CHRNA6 forms pentameric channels with CHRNB2, CHRNB3 and CHRNA4 that exhibit high sensitivity to ACh and nicotine and are predominantly expressed in only a few brain areas, including dopaminergic neurons, norepirephrine neurons and cells of the visual system. nAChrs containing CHRNA6 subunits mediate endogenous cholinergic modulation of dopamine and gamma-aminobutyric acid (GABA) release in response to nicotine at nerve terminals. The protein is Neuronal acetylcholine receptor subunit alpha-6 of Homo sapiens (Human).